Here is a 431-residue protein sequence, read N- to C-terminus: NADH-quinone oxidoreductase subunit D 2 (431 aa).

Residues 1 to 27 (MNDHKGLGGLDTEATPGSFGAGEPPRA) form a disordered region.

This sequence belongs to the complex I 49 kDa subunit family. As to quaternary structure, NDH-1 is composed of 14 different subunits. Subunits NuoB, C, D, E, F, and G constitute the peripheral sector of the complex.

The protein resides in the cell inner membrane. It carries out the reaction a quinone + NADH + 5 H(+)(in) = a quinol + NAD(+) + 4 H(+)(out). Functionally, NDH-1 shuttles electrons from NADH, via FMN and iron-sulfur (Fe-S) centers, to quinones in the respiratory chain. The immediate electron acceptor for the enzyme in this species is believed to be ubiquinone. Couples the redox reaction to proton translocation (for every two electrons transferred, four hydrogen ions are translocated across the cytoplasmic membrane), and thus conserves the redox energy in a proton gradient. In Anaeromyxobacter sp. (strain Fw109-5), this protein is NADH-quinone oxidoreductase subunit D 2.